A 543-amino-acid chain; its full sequence is NXPE family member 4 (543 aa).

The first 26 residues, 1 to 26 (MKTLASRKSLWMLLFIVIFWVSFTVF), serve as a signal peptide directing secretion. 3 N-linked (GlcNAc...) asparagine glycosylation sites follow: asparagine 91, asparagine 159, and asparagine 223.

The protein belongs to the NXPE family.

It is found in the secreted. The chain is NXPE family member 4 (Nxpe4) from Mus musculus (Mouse).